A 543-amino-acid polypeptide reads, in one-letter code: MLRYEERKLNNLTLSSFSKSGVSSDTRLYIAKENTDKAYVAPEKFSSKVLTWLGKMPLFKNTEVVQKHTENIRVQNQKILQTFLQALTEKYGEKAVNNALYMSSINMNKPLTQRLVVQITECVKGADGGFINIIKNKDNVGVMNAALVIKGGDTKVTEQNNDVGAESKQPLLDIALKGLKRTIPQLEQMDGNSLRENFQEMASGNGPLRSLMTNLQSLNKIPEAKQLNDYVTTLKNIQIGADRFSQWGTCGGEVERWIDKASTHELTQAVKKIHVIAKELKNVTAEFEKIKAGASMPQTMNGPTLGLARFAVSSIPINQQTQVKLSDGMPVPVNTLTFDGKPVALAGSYPKNTPDALEAHMKMLLEKECSCLAVLTSEDQMQAKQLPAYFRGSYTFGEVHTNSQKVSSASQGGAIDQYNMQLSCGEKRYTIPVLHVKNWPDHQPLPSTDQLEYLADRVKNSNQNGAPGRSSSDKHLPMIHCLGGVGRTGTMAAALVLKDNPHSNLEQVRADFRNSRNNRMLEDASQFVQLKAMQAQLLMTTAS.

The chaperone-binding stretch occupies residues 35–139 (TDKAYVAPEK…FINIIKNKDN (105 aa)). A Bacterial Rho-GAP domain is found at 162–293 (DVGAESKQPL…TAEFEKIKAG (132 aa)). In terms of domain architecture, Tyrosine-protein phosphatase spans 315–543 (IPINQQTQVK…QAQLLMTTAS (229 aa)). Residue C481 is the Phosphocysteine intermediate of the active site.

In terms of assembly, forms a complex with SicP.

The protein localises to the secreted. The protein resides in the host cytoplasm. It carries out the reaction O-phospho-L-tyrosyl-[protein] + H2O = L-tyrosyl-[protein] + phosphate. Functionally, effector proteins function to alter host cell physiology and promote bacterial survival in host tissues. This protein includes tyrosine phosphatase and GTPase activating protein (GAP) activities. After bacterial internalization, GAP mediates the reversal of the cytoskeletal changes induced by SopE. This function is independent of its tyrosine phosphatase activity, which remains unclear. The protein is Secreted effector protein SptP (sptP) of Salmonella paratyphi A (strain ATCC 9150 / SARB42).